Reading from the N-terminus, the 92-residue chain is MTDSDVQPPKIEFPCERYPIKVIGTAGEGFSDLVIEVIQRHAPDLDASTLVMRDSRNGNFLSVQVLITATSVEQLQAIHVDLRATGRVHMVL.

Belongs to the UPF0250 family.

In Ectopseudomonas mendocina (strain ymp) (Pseudomonas mendocina), this protein is UPF0250 protein Pmen_3793.